Reading from the N-terminus, the 159-residue chain is Large ribosomal subunit protein uL11 (159 aa).

The protein belongs to the universal ribosomal protein uL11 family. In terms of assembly, part of the ribosomal stalk of the 50S ribosomal subunit. Interacts with L10 and the large rRNA to form the base of the stalk. L10 forms an elongated spine to which L12 dimers bind in a sequential fashion forming a multimeric L10(L12)X complex.

Its function is as follows. Forms part of the ribosomal stalk which helps the ribosome interact with GTP-bound translation factors. The sequence is that of Large ribosomal subunit protein uL11 from Methanococcus maripaludis (strain DSM 14266 / JCM 13030 / NBRC 101832 / S2 / LL).